The sequence spans 351 residues: Putative glycosyltransferase 45 (351 aa).

This sequence belongs to the glycosyltransferase group 1 family.

The chain is Putative glycosyltransferase 45 (SIFV0045) from Sulfolobus islandicus filamentous virus (isolate Iceland/Hveragerdi) (SIFV).